The primary structure comprises 288 residues: Diaminopimelate epimerase (288 aa).

Positions 14 and 67 each coordinate substrate. Residue cysteine 76 is the Proton donor of the active site. Substrate is bound by residues 77–78 (GN), asparagine 166, asparagine 199, and 217–218 (ER). Cysteine 226 functions as the Proton acceptor in the catalytic mechanism. Residue 227–228 (GT) coordinates substrate.

This sequence belongs to the diaminopimelate epimerase family. In terms of assembly, homodimer.

The protein resides in the cytoplasm. The enzyme catalyses (2S,6S)-2,6-diaminopimelate = meso-2,6-diaminopimelate. Its pathway is amino-acid biosynthesis; L-lysine biosynthesis via DAP pathway; DL-2,6-diaminopimelate from LL-2,6-diaminopimelate: step 1/1. Functionally, catalyzes the stereoinversion of LL-2,6-diaminopimelate (L,L-DAP) to meso-diaminopimelate (meso-DAP), a precursor of L-lysine and an essential component of the bacterial peptidoglycan. The chain is Diaminopimelate epimerase from Bacillus cytotoxicus (strain DSM 22905 / CIP 110041 / 391-98 / NVH 391-98).